The primary structure comprises 567 residues: Urease subunit alpha (567 aa).

In terms of domain architecture, Urease spans 129–567; it reads GGIDVHVHFI…VPMSQRYFLF (439 aa). Ni(2+)-binding residues include histidine 134, histidine 136, and lysine 217. Lysine 217 carries the post-translational modification N6-carboxylysine. A substrate-binding site is contributed by histidine 219. 2 residues coordinate Ni(2+): histidine 246 and histidine 272. Histidine 320 functions as the Proton donor in the catalytic mechanism. Residue aspartate 360 participates in Ni(2+) binding.

It belongs to the metallo-dependent hydrolases superfamily. Urease alpha subunit family. As to quaternary structure, heterotrimer of UreA (gamma), UreB (beta) and UreC (alpha) subunits. Three heterotrimers associate to form the active enzyme. The cofactor is Ni cation. Carboxylation allows a single lysine to coordinate two nickel ions.

It localises to the cytoplasm. The catalysed reaction is urea + 2 H2O + H(+) = hydrogencarbonate + 2 NH4(+). It functions in the pathway nitrogen metabolism; urea degradation; CO(2) and NH(3) from urea (urease route): step 1/1. In Blochmanniella floridana, this protein is Urease subunit alpha.